The following is a 309-amino-acid chain: Cyclin-dependent kinase B1-1 (309 aa).

Positions 4–301 (YEKLEKVGEG…AKTALDHPYF (298 aa)) constitute a Protein kinase domain. ATP-binding positions include 10–18 (VGEGTYGKV) and lysine 33. Residue tyrosine 15 is modified to Phosphotyrosine. The Proton acceptor role is filled by aspartate 142. Phosphothreonine; by CAK is present on threonine 176.

This sequence belongs to the protein kinase superfamily. CMGC Ser/Thr protein kinase family. CDC2/CDKX subfamily. In terms of assembly, interacts with CKS1. Interacts with CYCU3-1. Interacts with SIM, SMR1 and SMR2. As to expression, highly expressed in guard cells and stomatal precursor cells of cotyledons. Expressed in roots, stems, flowers and siliques.

The protein resides in the nucleus. The enzyme catalyses L-seryl-[protein] + ATP = O-phospho-L-seryl-[protein] + ADP + H(+). The catalysed reaction is L-threonyl-[protein] + ATP = O-phospho-L-threonyl-[protein] + ADP + H(+). It catalyses the reaction [DNA-directed RNA polymerase] + ATP = phospho-[DNA-directed RNA polymerase] + ADP + H(+). Its activity is regulated as follows. Phosphorylation at Thr-14 or Tyr-15 inactivates the enzyme, while phosphorylation at Thr-176 activates it. May control G2/M (mitosis) phase progression. Plays a role in regulating seedling growth in darkness via regulation of hypocotyl cell elongation and cotyledon cell development. Plays a role in stomatal development. Required to suppress endoreduplication. Together with CDKB1-2, promotes both the last division in the stomatal cell lineage as well as the number of stomata. In collaboration with MYB124 and MYB88, restrict the G1/S transition and chloroplast and nuclear number during stomatal formation, and normally maintain fate and developmental progression throughout the stomatal cell lineage. In Arabidopsis thaliana (Mouse-ear cress), this protein is Cyclin-dependent kinase B1-1 (CDKB1-1).